Reading from the N-terminus, the 524-residue chain is Unconventional prefoldin RPB5 interactor (524 aa).

Disordered regions lie at residues Met1–Pro20, Ser284–Ser320, and Val335–Met373. The segment covering Asp296–Ser307 has biased composition (acidic residues). Phosphoserine; by RPS6KB1 is present on Ser361. Residue Ser431 is modified to Phosphoserine.

The protein belongs to the RNA polymerase II subunit 5-mediating protein family. As to quaternary structure, homodimer. Component of the PAQosome complex which is responsible for the biogenesis of several protein complexes and which consists of R2TP complex members RUVBL1, RUVBL2, RPAP3 and PIH1D1, URI complex members PFDN2, PFDN6, PDRG1, UXT and URI1 as well as ASDURF, POLR2E and DNAAF10/WDR92. Interacts with POLR2E/RPB5, RUVBL2 and RUVBL1. Interacts with PFDN2, PFDN4 and STAP1; the interactions are phosphorylation-dependent and occur in a growth-dependent manner in the mitochondrion. Interacts with UXT. Interacts with PPP1CC; the interaction is phosphorylation-dependent and occurs in a growth factor-dependent manner. Interacts (via the middle C-terminal region) with GTF2F1 and GTF2F2. Interacts with DMAP1. Interacts with TSC1 and TSC2. Interacts with PRPF8 and EFTUD2 in a ZNHIT2-dependent manner. In terms of processing, phosphorylated. Phosphorylation occurs essentially on serine residues. Phosphorylation occurs in response to androgen treatment in prostate cancer cells in a mTOR-dependent manner. Phosphorylated; hyperhosphorylated in mitochondria in a mTORC-dependent signaling pathway. Phosphorylated at Ser-361 by RPS6KB1 in a growth factor- and rapamycin-dependent manner. S6K1-mediated mitochondrial phosphorylation at Ser-361 disrupts the URI1-PPP1CC complex in the mitochondrion, relieves PPP1CC phosphatase inhibition activity and hence engages a negative feedback diminishing RPS6KB1 kinase activity, preventing sustained S6K1-dependent signaling.

Its subcellular location is the nucleus. The protein localises to the cytoplasm. It localises to the mitochondrion. It is found in the cell projection. The protein resides in the dendrite. In terms of biological role, involved in gene transcription regulation. Acts as a transcriptional repressor in concert with the corepressor UXT to regulate androgen receptor (AR) transcription. May act as a tumor suppressor to repress AR-mediated gene transcription and to inhibit anchorage-independent growth in prostate cancer cells. Required for cell survival in ovarian cancer cells. Together with UXT, associates with chromatin to the NKX3-1 promoter region. Functionally, plays a central role in maintaining S6K1 signaling and BAD phosphorylation under normal growth conditions thereby protecting cells from potential deleterious effects of sustained S6K1 signaling. The URI1-PPP1CC complex acts as a central component of a negative feedback mechanism that counteracts excessive S6K1 survival signaling to BAD in response to growth factors. Mediates inhibition of PPP1CC phosphatase activity in mitochondria. Coordinates the regulation of nutrient-sensitive gene expression availability in a mTOR-dependent manner. Seems to be a scaffolding protein able to assemble a prefoldin-like complex that contains PFDs and proteins with roles in transcription and ubiquitination. The polypeptide is Unconventional prefoldin RPB5 interactor (URI1) (Bos taurus (Bovine)).